Reading from the N-terminus, the 142-residue chain is Large-conductance mechanosensitive channel (142 aa).

The next 3 membrane-spanning stretches (helical) occupy residues 10 to 30 (FAVK…GAFG), 40 to 60 (LIMP…LFIV), and 86 to 106 (GNFI…FVMV).

It belongs to the MscL family. Homopentamer.

The protein localises to the cell inner membrane. Channel that opens in response to stretch forces in the membrane lipid bilayer. May participate in the regulation of osmotic pressure changes within the cell. This chain is Large-conductance mechanosensitive channel, found in Acidovorax ebreus (strain TPSY) (Diaphorobacter sp. (strain TPSY)).